Here is a 232-residue protein sequence, read N- to C-terminus: Noggin (232 aa).

The signal sequence occupies residues 1–27 (MERCPSLGVTLYALVVVLGLRATPAGG). A glycan (N-linked (GlcNAc...) asparagine) is linked at N62. The interval 77 to 96 (GFMATSPPEDRPGGGGGAAG) is disordered. Intrachain disulfides connect C155–C192, C178–C228, C184–C230, and C207–C215.

The protein belongs to the noggin family. As to quaternary structure, homodimer. Interacts with GDF5; inhibits chondrocyte differentiation.

It is found in the secreted. Functionally, inhibitor of bone morphogenetic proteins (BMP) signaling which is required for growth and patterning of the neural tube and somite. Essential for cartilage morphogenesis and joint formation. Inhibits chondrocyte differentiation through its interaction with GDF5 and, probably, GDF6. The sequence is that of Noggin (NOG) from Homo sapiens (Human).